The sequence spans 468 residues: ATP synthase subunit beta 1 (468 aa).

ATP is bound at residue 151-158 (GGAGVGKT).

This sequence belongs to the ATPase alpha/beta chains family. In terms of assembly, F-type ATPases have 2 components, CF(1) - the catalytic core - and CF(0) - the membrane proton channel. CF(1) has five subunits: alpha(3), beta(3), gamma(1), delta(1), epsilon(1). CF(0) has three main subunits: a(1), b(2) and c(9-12). The alpha and beta chains form an alternating ring which encloses part of the gamma chain. CF(1) is attached to CF(0) by a central stalk formed by the gamma and epsilon chains, while a peripheral stalk is formed by the delta and b chains.

The protein localises to the cell inner membrane. It catalyses the reaction ATP + H2O + 4 H(+)(in) = ADP + phosphate + 5 H(+)(out). Its function is as follows. Produces ATP from ADP in the presence of a proton gradient across the membrane. The catalytic sites are hosted primarily by the beta subunits. This is ATP synthase subunit beta 1 from Photobacterium profundum (strain SS9).